A 449-amino-acid chain; its full sequence is MDLRPELPTVSSASQVHPGAAAAAAAASIPVSMAGNLLRGPPLLLRAADKYPRTPKCARCRNHGVVSALKGHKRYCRWKDCMCAKCTLIAERQRVMAAQVALRRQQAQEENEARELQLLYGTAEGLALAAANGIIPPRPNYEVFGSVNSESNSESSIQKYELFPKTQLSGSTTTQKSVGKPASTESDSAPGMSSPDGRHGGGSGSENGDSESFINSPVSKPLKDGEETPGSVSSLGSDSGSETDKEEQEPSPSSAASRHMNAIDILTRVFPSHKRSVLELVLQGCGKDVVQAIEQILNNSGAQAPNKAGPEETWTAERMLQSAQQPPAGSATAATTTRPMLPGAMTLSNRSAFSPLQPNAPHFGADPGTYPLGTHLGLNPLRLAYSAHSRGLAFMTPYSTTGLMPTLGFRPPMDYAFSDLIRDRTMLHKEQGYASGLYGPLVNNTPDKQ.

A DNA-binding region (DM) is located at residues 57-104; it reads CARCRNHGVVSALKGHKRYCRWKDCMCAKCTLIAERQRVMAAQVALRR. A disordered region spans residues 163–259; it reads FPKTQLSGST…PSPSSAASRH (97 aa). Polar residues predominate over residues 166–187; the sequence is TQLSGSTTTQKSVGKPASTESD. Residues 230-240 are compositionally biased toward low complexity; sequence GSVSSLGSDSG. A DMA domain is found at 260–295; sequence MNAIDILTRVFPSHKRSVLELVLQGCGKDVVQAIEQ.

This sequence belongs to the DMRT family. Expressed in brain and eye.

The protein resides in the nucleus. Functionally, may be involved in sexual development. The polypeptide is Doublesex- and mab-3-related transcription factor A2 (dmrta2) (Xiphophorus maculatus (Southern platyfish)).